A 394-amino-acid polypeptide reads, in one-letter code: Elongation factor Tu (394 aa).

A tr-type G domain is found at 10 to 204 (KPHVNVGTIG…ALDSYIPTPE (195 aa)). The tract at residues 19 to 26 (GHVDHGKT) is G1. Residue 19 to 26 (GHVDHGKT) coordinates GTP. Residue Thr26 coordinates Mg(2+). The tract at residues 60–64 (GITIN) is G2. The interval 81–84 (DCPG) is G3. GTP is bound by residues 81–85 (DCPGH) and 136–139 (NKCD). Positions 136–139 (NKCD) are G4. Positions 174–176 (SAL) are G5.

This sequence belongs to the TRAFAC class translation factor GTPase superfamily. Classic translation factor GTPase family. EF-Tu/EF-1A subfamily. Monomer.

Its subcellular location is the cytoplasm. It catalyses the reaction GTP + H2O = GDP + phosphate + H(+). In terms of biological role, GTP hydrolase that promotes the GTP-dependent binding of aminoacyl-tRNA to the A-site of ribosomes during protein biosynthesis. The protein is Elongation factor Tu of Neisseria gonorrhoeae (strain ATCC 700825 / FA 1090).